Reading from the N-terminus, the 565-residue chain is MEPKTKKQRSLYIPYAGPVLLEFPLLNKGSAFSMEERRNFNLLGLLPEVVETIEEQAERAWIQYQGFKTEIDKHIYLRNIQDTNETLFYRLVNNHLDEMMPVIYTPTVGAACERFSEIYRRSRGVFISYQNRHNMDDILQNVPNHNIKVIVVTDGERILGLGDQGIGGMGIPIGKLSLYTACGGISPAYTLPVVLDVGTNNQQLLNDPLYMGWRNPRITDDEYYEFVDEFIQAVKQRWPDVLLQFEDFAQKNAMPLLNRYRNEICSFNDDIQGTAAVTVGTLIAASRAAGGQLSEKKIVFLGAGSAGCGIAEMIIAQTQREGLSEEAARQKVFMVDRFGLLTDKMPNLLPFQTKLVQKRENLSDWDTDSDVLSLLDVVRNVKPDILIGVSGQTGLFTEEIIREMHKHCPRPIVMPLSNPTSRVEATPQDIIAWTEGNALVATGSPFNPVVWKDKIYPIAQCNNAFIFPGIGLGVIASGASRITDEMLMSASETLAQYSPLVLNGEGMVLPELKDIQKVSRAIAFAVGKMAQQQGVAVKTSAEALQQAIDDNFWQAEYRDYRRTSI.

Tyr-104 functions as the Proton donor in the catalytic mechanism. Residue Arg-157 participates in NAD(+) binding. Lys-175 (proton acceptor) is an active-site residue. A divalent metal cation-binding residues include Glu-246, Asp-247, and Asp-270. NAD(+) is bound by residues Asp-270 and Asn-418.

The protein belongs to the malic enzymes family. Homotetramer. It depends on Mg(2+) as a cofactor. Mn(2+) is required as a cofactor.

It catalyses the reaction (S)-malate + NAD(+) = pyruvate + CO2 + NADH. The enzyme catalyses oxaloacetate + H(+) = pyruvate + CO2. This Escherichia coli O9:H4 (strain HS) protein is NAD-dependent malic enzyme.